The chain runs to 441 residues: Histone-lysine N-methyltransferase set9 (441 aa).

Positions 108 to 221 (CKFEICSTNQ…PGEEITTFYS (114 aa)) constitute an SET domain.

It belongs to the class V-like SAM-binding methyltransferase superfamily. Histone-lysine methyltransferase family. Suvar4-20 subfamily.

Its subcellular location is the nucleus. The protein localises to the chromosome. The enzyme catalyses L-lysyl(20)-[histone H4] + 3 S-adenosyl-L-methionine = N(6),N(6),N(6)-trimethyl-L-lysyl(20)-[histone H4] + 3 S-adenosyl-L-homocysteine + 3 H(+). Its function is as follows. Histone methyltransferase that specifically trimethylates 'Lys-20' of histone H4 to form H4K20me3. H4 'Lys-20' methylation is apparently not involved in the regulation of gene expression or heterochromatin function but participates in DNA damage response by giving a 'histone mark' required for the recruitment of the checkpoint protein Crb2 to sites of DNA damage. This Schizosaccharomyces pombe (strain 972 / ATCC 24843) (Fission yeast) protein is Histone-lysine N-methyltransferase set9 (set9).